Reading from the N-terminus, the 456-residue chain is Exodeoxyribonuclease 7 large subunit (456 aa).

It belongs to the XseA family. In terms of assembly, heterooligomer composed of large and small subunits.

It is found in the cytoplasm. It carries out the reaction Exonucleolytic cleavage in either 5'- to 3'- or 3'- to 5'-direction to yield nucleoside 5'-phosphates.. In terms of biological role, bidirectionally degrades single-stranded DNA into large acid-insoluble oligonucleotides, which are then degraded further into small acid-soluble oligonucleotides. This Lactobacillus gasseri (strain ATCC 33323 / DSM 20243 / BCRC 14619 / CIP 102991 / JCM 1131 / KCTC 3163 / NCIMB 11718 / NCTC 13722 / AM63) protein is Exodeoxyribonuclease 7 large subunit.